The primary structure comprises 440 residues: Chromosome partition protein MukF (440 aa).

The tract at residues 208 to 236 (LSETSGTLRELQDTLEAAGDKLQANLLRI) is leucine-zipper.

It belongs to the MukF family. Interacts, and probably forms a ternary complex, with MukE and MukB via its C-terminal region. The complex formation is stimulated by calcium or magnesium. It is required for an interaction between MukE and MukB.

It localises to the cytoplasm. The protein localises to the nucleoid. Its function is as follows. Involved in chromosome condensation, segregation and cell cycle progression. May participate in facilitating chromosome segregation by condensation DNA from both sides of a centrally located replisome during cell division. Not required for mini-F plasmid partitioning. Probably acts via its interaction with MukB and MukE. Overexpression results in anucleate cells. It has a calcium binding activity. In Escherichia coli O157:H7, this protein is Chromosome partition protein MukF.